The primary structure comprises 224 residues: Probable proteasome subunit beta type-4 (224 aa).

It belongs to the peptidase T1B family. In terms of assembly, the 26S proteasome consists of a 20S proteasome core and two 19S regulatory subunits. The 20S proteasome core is composed of 28 subunits that are arranged in four stacked rings, resulting in a barrel-shaped structure. The two end rings are each formed by seven alpha subunits, and the two central rings are each formed by seven beta subunits. The catalytic chamber with the active sites is on the inside of the barrel.

The protein localises to the cytoplasm. It localises to the nucleus. Non-catalytic component of the proteasome, a multicatalytic proteinase complex which is characterized by its ability to cleave peptides with Arg, Phe, Tyr, Leu, and Glu adjacent to the leaving group at neutral or slightly basic pH. The proteasome has an ATP-dependent proteolytic activity. This chain is Probable proteasome subunit beta type-4 (CPR1), found in Cryptococcus neoformans var. neoformans serotype D (strain B-3501A) (Filobasidiella neoformans).